The chain runs to 277 residues: 3-methyl-2-oxobutanoate hydroxymethyltransferase (277 aa).

Residues aspartate 43 and aspartate 82 each contribute to the Mg(2+) site. 3-methyl-2-oxobutanoate is bound by residues 43–44 (DS), aspartate 82, and lysine 112. Residue glutamate 114 coordinates Mg(2+). Catalysis depends on glutamate 181, which acts as the Proton acceptor.

It belongs to the PanB family. As to quaternary structure, homodecamer; pentamer of dimers. Requires Mg(2+) as cofactor.

The protein resides in the cytoplasm. The catalysed reaction is 3-methyl-2-oxobutanoate + (6R)-5,10-methylene-5,6,7,8-tetrahydrofolate + H2O = 2-dehydropantoate + (6S)-5,6,7,8-tetrahydrofolate. Its pathway is cofactor biosynthesis; (R)-pantothenate biosynthesis; (R)-pantoate from 3-methyl-2-oxobutanoate: step 1/2. Its function is as follows. Catalyzes the reversible reaction in which hydroxymethyl group from 5,10-methylenetetrahydrofolate is transferred onto alpha-ketoisovalerate to form ketopantoate. In Bacillus subtilis (strain 168), this protein is 3-methyl-2-oxobutanoate hydroxymethyltransferase.